The chain runs to 319 residues: Cytochrome f (319 aa).

A signal peptide spans 1–35 (MQNRNISYWIKKCVIQSISIVILMKIIAWPSISEA). Heme-binding residues include Y36, C56, C59, and H60. A helical transmembrane segment spans residues 285–305 (VQSLLVFFVSVTLAQIFLVLK).

This sequence belongs to the cytochrome f family. In terms of assembly, the 4 large subunits of the cytochrome b6-f complex are cytochrome b6, subunit IV (17 kDa polypeptide, petD), cytochrome f and the Rieske protein, while the 4 small subunits are PetG, PetL, PetM and PetN. The complex functions as a dimer. It depends on heme as a cofactor.

It localises to the plastid. It is found in the chloroplast thylakoid membrane. Functionally, component of the cytochrome b6-f complex, which mediates electron transfer between photosystem II (PSII) and photosystem I (PSI), cyclic electron flow around PSI, and state transitions. The protein is Cytochrome f of Physcomitrium patens (Spreading-leaved earth moss).